The following is a 483-amino-acid chain: Regulatory protein ViaA (483 aa).

The protein belongs to the ViaA family. As to quaternary structure, homodimer. Interacts with RavA.

It is found in the cytoplasm. In terms of biological role, component of the RavA-ViaA chaperone complex, which may act on the membrane to optimize the function of some of the respiratory chains. ViaA stimulates the ATPase activity of RavA. The polypeptide is Regulatory protein ViaA (Escherichia coli O1:K1 / APEC).